Consider the following 198-residue polypeptide: DnaJ homolog subfamily C member 5 (198 aa).

Phosphoserine occurs at positions 8, 10, 12, and 15. One can recognise a J domain in the interval 13 to 82 (GESLYHVLGL…RNIYDKYGSL (70 aa)). Tyr-17 is modified (phosphotyrosine). At Lys-56 the chain carries N6-acetyllysine. Ser-151 bears the Phosphoserine mark.

Oligomers. Homodimer. Interacts with the chaperone complex consisting of HSC70 and SGTA. Interacts with ZDHHC13 (via ANK repeats). Interacts with ZDHHC17 (via ANK repeats). Interacts with SYT1, SYT5 and SYT7, and with SYT9, forming a complex with SNAP25. In terms of processing, ser-10 phosphorylation induces an order-to-disorder transition triggering the interaction with Lys-58. This conformational switch modulates DNAJC5's cellular functions by reducing binding to syntaxin and synaptogamin without altering HSC70 interactions. Palmitoylated. Could be palmitoylated by DHHC3, DHHC7, DHHC15 and DHHC17. Palmitoylation occurs probably in the cysteine-rich domain and regulates DNAJC5 membrane attachment. As to expression, expressed in pancreas, kidney, skeletal muscle, liver, lung, placenta, brain and heart.

It is found in the cytoplasm. The protein resides in the cytosol. It localises to the membrane. The protein localises to the cytoplasmic vesicle. Its subcellular location is the secretory vesicle. It is found in the chromaffin granule membrane. The protein resides in the melanosome. It localises to the cell membrane. Acts as a general chaperone in regulated exocytosis. Acts as a co-chaperone for the SNARE protein SNAP-25. Involved in the calcium-mediated control of a late stage of exocytosis. May have an important role in presynaptic function. May be involved in calcium-dependent neurotransmitter release at nerve endings. The sequence is that of DnaJ homolog subfamily C member 5 from Homo sapiens (Human).